A 210-amino-acid chain; its full sequence is Cytochrome c4 (210 aa).

The first 20 residues, 1 to 20 (MNKVLVSLLLTLGITGMAHA), serve as a signal peptide directing secretion. Positions 34, 37, 38, 86, 139, 142, 143, and 187 each coordinate heme c.

Post-translationally, binds 2 heme c groups covalently per subunit.

It localises to the periplasm. Diheme, high potential cytochrome c believed to be an intermediate electron donor to terminal oxidation systems. The sequence is that of Cytochrome c4 (cc4) from Stutzerimonas stutzeri (Pseudomonas stutzeri).